The primary structure comprises 348 residues: Mediator of RNA polymerase II transcription subunit 18 (348 aa).

Positions 152–218 (MDVDLEHKDK…KNDEVKHSEV (67 aa)) are enriched in basic and acidic residues. Residues 152-227 (MDVDLEHKDK…VNLEDGAETG (76 aa)) are disordered. The stretch at 167–223 (DTKEKEEDKKEEDKKEEDKKEEDKKEEDKKEEDKKEEEKVEKKNDEVKHSEVNLEDG) forms a coiled coil.

Belongs to the Mediator complex subunit 18 family. Component of the Mediator complex.

The protein resides in the nucleus. Its function is as follows. Component of the Mediator complex, a coactivator involved in the regulated transcription of nearly all RNA polymerase II-dependent genes. Mediator functions as a bridge to convey information from gene-specific regulatory proteins to the basal RNA polymerase II transcription machinery. Mediator is recruited to promoters by direct interactions with regulatory proteins and serves as a scaffold for the assembly of a functional preinitiation complex with RNA polymerase II and the general transcription factors. In Scheffersomyces stipitis (strain ATCC 58785 / CBS 6054 / NBRC 10063 / NRRL Y-11545) (Yeast), this protein is Mediator of RNA polymerase II transcription subunit 18 (SRB5).